The following is a 147-amino-acid chain: Hemoglobin subunit beta (147 aa).

Residue Val2 is modified to N-acetylvaline. The Globin domain occupies 3-147 (HLTAEEKAAV…VATALAHKYH (145 aa)). Thr13 carries the post-translational modification Phosphothreonine. Position 45 is a phosphoserine (Ser45). Lys60 carries the N6-acetyllysine modification. Residue His64 coordinates heme b. Lys83 is subject to N6-acetyllysine. His93 contacts heme b. The residue at position 94 (Cys94) is an S-nitrosocysteine. N6-acetyllysine is present on Lys145.

The protein belongs to the globin family. In terms of assembly, heterotetramer of two alpha chains and two beta chains. Red blood cells.

Its function is as follows. Involved in oxygen transport from the lung to the various peripheral tissues. This chain is Hemoglobin subunit beta (HBB), found in Carlito syrichta (Philippine tarsier).